A 513-amino-acid chain; its full sequence is Putative ADP-ribosyl glycohydrolase L444 (513 aa).

Residues 1 to 23 show a composition bias toward basic and acidic residues; sequence MSDKIQSRESKTTKPTKTEKISD. The segment at 1-33 is disordered; it reads MSDKIQSRESKTTKPTKTEKISDKSGNLSQVKS. Residues 24-33 are compositionally biased toward polar residues; that stretch reads KSGNLSQVKS.

This sequence belongs to the ADP-ribosylglycohydrolase family.

The chain is Putative ADP-ribosyl glycohydrolase L444 from Acanthamoeba polyphaga mimivirus (APMV).